A 211-amino-acid polypeptide reads, in one-letter code: Small ribosomal subunit protein uS3 (211 aa).

The 69-residue stretch at 39-107 folds into the KH type-2 domain; sequence VTKYVESSFA…VPSLNVVEVK (69 aa).

This sequence belongs to the universal ribosomal protein uS3 family. As to quaternary structure, part of the 30S ribosomal subunit. Forms a tight complex with proteins S10 and S14.

Functionally, binds the lower part of the 30S subunit head. Binds mRNA in the 70S ribosome, positioning it for translation. In Neorickettsia sennetsu (strain ATCC VR-367 / Miyayama) (Ehrlichia sennetsu), this protein is Small ribosomal subunit protein uS3.